Here is a 257-residue protein sequence, read N- to C-terminus: 1-(5-phosphoribosyl)-5-[(5-phosphoribosylamino)methylideneamino] imidazole-4-carboxamide isomerase (257 aa).

Aspartate 8 (proton acceptor) is an active-site residue. The active-site Proton donor is aspartate 130.

Belongs to the HisA/HisF family.

It is found in the cytoplasm. It catalyses the reaction 1-(5-phospho-beta-D-ribosyl)-5-[(5-phospho-beta-D-ribosylamino)methylideneamino]imidazole-4-carboxamide = 5-[(5-phospho-1-deoxy-D-ribulos-1-ylimino)methylamino]-1-(5-phospho-beta-D-ribosyl)imidazole-4-carboxamide. Its pathway is amino-acid biosynthesis; L-histidine biosynthesis; L-histidine from 5-phospho-alpha-D-ribose 1-diphosphate: step 4/9. In Chlorobium chlorochromatii (strain CaD3), this protein is 1-(5-phosphoribosyl)-5-[(5-phosphoribosylamino)methylideneamino] imidazole-4-carboxamide isomerase.